The sequence spans 365 residues: IgG receptor FcRn large subunit p51 (365 aa).

Residues 1–21 form the signal peptide; it reads MGMPLPWALSLLLVLLPQTWG. The tract at residues 22 to 110 is alpha-1; the sequence is SETRPPLMYH…KTLEKILNGT (89 aa). Over 22 to 297 the chain is Extracellular; sequence SETRPPLMYH…VDLDSSARSS (276 aa). N-linked (GlcNAc...) asparagine glycans are attached at residues asparagine 108, asparagine 125, asparagine 149, and asparagine 246. The tract at residues 111 to 200 is alpha-2; sequence YTLQGLLGCE…ERGRRNLEWK (90 aa). 2 disulfide bridges follow: cysteine 119-cysteine 182 and cysteine 221-cysteine 275. The interval 201–290 is alpha-3; the sequence is EPPSMRLKAR…GLAQPLTVDL (90 aa). One can recognise an Ig-like C1-type domain in the interval 202 to 289; it reads PPSMRLKARP…EGLAQPLTVD (88 aa). Residues 291–297 are connecting peptide; it reads DSSARSS. A helical membrane pass occupies residues 298–321; sequence VPVVGIVLGLLLVVVAIAGGVLLW. Topologically, residues 322 to 365 are cytoplasmic; that stretch reads GRMRSGLPAPWLSLSGDDSGDLLPGGNLPPEAEPQGANAFPATS. Phosphoserine is present on serine 334. Residues 343–365 form a disordered region; it reads LLPGGNLPPEAEPQGANAFPATS.

This sequence belongs to the immunoglobulin superfamily. As to quaternary structure, fcRn complex consists of two subunits: p51, and p14 which is equivalent to beta-2-microglobulin. It forms an MHC class I-like heterodimer. Interacts with albumin/ALB; this interaction regulates ALB homeostasis. As to expression, intestinal epithelium of suckling rodents. Expressed in neonatal intestine and fetal yolk sac.

It is found in the cell membrane. It localises to the endosome membrane. Its function is as follows. Cell surface receptor that transfers passive humoral immunity from the mother to the newborn. Binds to the Fc region of monomeric immunoglobulin gamma and mediates its selective uptake from milk. IgG in the milk is bound at the apical surface of the intestinal epithelium. The resultant FcRn-IgG complexes are transcytosed across the intestinal epithelium and IgG is released from FcRn into blood or tissue fluids. Throughout life, contributes to effective humoral immunity by recycling IgG and extending its half-life in the circulation. Mechanistically, monomeric IgG binding to FcRn in acidic endosomes of endothelial and hematopoietic cells recycles IgG to the cell surface where it is released into the circulation. In addition of IgG, regulates homeostasis of the other most abundant circulating protein albumin/ALB. This chain is IgG receptor FcRn large subunit p51 (Fcgrt), found in Mus musculus (Mouse).